The chain runs to 64 residues: MNINDYKDSIIVGVLFLLFTRDWFDELIFGTFPSLKGMPWVFLALKVLGIMVLFYLLDAIINVK.

Residues 41–61 (VFLALKVLGIMVLFYLLDAII) traverse the membrane as a helical segment.

It localises to the membrane. This is an uncharacterized protein from Acheta domesticus (House cricket).